The primary structure comprises 85 residues: Translation initiation factor IF-1 2 (85 aa).

The S1-like domain occupies 1–72 (MAKEELIEMQ…TKGRITFRHL (72 aa)).

This sequence belongs to the IF-1 family. As to quaternary structure, component of the 30S ribosomal translation pre-initiation complex which assembles on the 30S ribosome in the order IF-2 and IF-3, IF-1 and N-formylmethionyl-tRNA(fMet); mRNA recruitment can occur at any time during PIC assembly.

Its subcellular location is the cytoplasm. In terms of biological role, one of the essential components for the initiation of protein synthesis. Stabilizes the binding of IF-2 and IF-3 on the 30S subunit to which N-formylmethionyl-tRNA(fMet) subsequently binds. Helps modulate mRNA selection, yielding the 30S pre-initiation complex (PIC). Upon addition of the 50S ribosomal subunit IF-1, IF-2 and IF-3 are released leaving the mature 70S translation initiation complex. The polypeptide is Translation initiation factor IF-1 2 (Paracidovorax citrulli (strain AAC00-1) (Acidovorax citrulli)).